Here is a 649-residue protein sequence, read N- to C-terminus: MELPHDKAWAYLLLTPPPLRDYFIQLPKPATLQLALNRFAAYLEKQYLRDSLYMEKIVIGTHYNVRKNRVLQPRIFVSPSNYTRILSTFYDHPDLIAEVLPIQHLSKSQLKRGGLTKNVLTSGLPEMNNEQNPYAVFEVNTIDDLKACFAFPTEWLIDILTGRNSISLHYTIDRTSIPKWYAHLEARFQYSDGVTKSLTDADLRQHYIGVQPIPVTCEELLQKMNDASINGNTMYRVHGYESIVSSRMETVNDLVKASGKPYDVVNVQTMSSYSRSISKAINQAVTKDRHNKHVGSTKLKNSQGPRTTIFVMPPYITVDVVCSPMTIKPGLGPIQTKLLKSIVDQSPRRFRIAYAAKPQIEQDVLNKRIFSTDEGPESYFQGVELLTPEAKSLLTALPQLVGTFHYEKLSYAHFPSYRLTAGGYNVDYFKRGVTVIVARKHGGKGMVAKLIWKLGTPVIDSDDYGRIIKLVEAGLTIDDAVTQLFSMDYDQRNSTVSAFDEHMEMIVSQSKMKQEITYPRASDPRITAFADYYSKWFLKVPYSDYVASVKNFVTKNGLSGPNGIQSTNHYDTLVIQVHTLPEATQFLGVNNIIEVYPIIDSYIGMILRQQTSNTCAELLLARYYESIHLRNFDMLPVGVVASTLEALVG.

It is found in the virion. The protein localises to the host cytoplasm. The protein resides in the host cytoskeleton. Functionally, minor inner capsid component. Displays NTPase and RNA 5'-triphosphatase (RTPase) activities. May function as a cofactor of polymerase VP2. Associates with microtubules and plays a role in the formation, structural organization and morphology of viral inclusions, where the assembly of cores and the replication of viral RNA occur. This chain is Microtubule-associated protein VP6 (S6), found in Cryphonectria parasitica (Chestnut blight fungus).